Consider the following 182-residue polypeptide: Ferritin heavy chain (182 aa).

Residue Met1 is modified to N-acetylmethionine. Residue Thr2 is modified to N-acetylthreonine; in Ferritin heavy chain, N-terminally processed. One can recognise a Ferritin-like diiron domain in the interval 11-160 (QNYHQDSEAA…DHVTNLRRMG (150 aa)). The Fe cation site is built by Glu28, Glu63, His66, Glu108, and Gln142.

The protein belongs to the ferritin family. Oligomer of 24 subunits. There are two types of subunits: L (light) chain and H (heavy) chain. The major chain can be light or heavy, depending on the species and tissue type. The functional molecule forms a roughly spherical shell with a diameter of 12 nm and contains a central cavity into which the insoluble mineral iron core is deposited. Interacts with NCOA4; NCOA4 promotes targeting of the iron-binding ferritin complex to autolysosomes following starvation or iron depletion.

The protein localises to the cytoplasm. The protein resides in the lysosome. It localises to the cytoplasmic vesicle. It is found in the autophagosome. It catalyses the reaction 4 Fe(2+) + O2 + 4 H(+) = 4 Fe(3+) + 2 H2O. Stores iron in a soluble, non-toxic, readily available form. Important for iron homeostasis. Has ferroxidase activity. Iron is taken up in the ferrous form and deposited as ferric hydroxides after oxidation. Also plays a role in delivery of iron to cells. Mediates iron uptake in capsule cells of the developing kidney. Delivery to lysosomes is mediated by the cargo receptor NCOA4 for autophagic degradation and release of iron. This Equus caballus (Horse) protein is Ferritin heavy chain (FTH1).